The primary structure comprises 668 residues: DNA ligase (668 aa).

Residues 37–41 (DAVYD), 86–87 (SM), and Glu-116 each bind NAD(+). The active-site N6-AMP-lysine intermediate is the Lys-118. Residues Arg-139, Glu-173, Lys-288, and Lys-312 each contribute to the NAD(+) site. Zn(2+)-binding residues include Cys-406, Cys-409, Cys-424, and Cys-429. Residues 590 to 668 (APDNFFKEKT…EQEAIAKIEK (79 aa)) enclose the BRCT domain.

This sequence belongs to the NAD-dependent DNA ligase family. LigA subfamily. Mg(2+) serves as cofactor. It depends on Mn(2+) as a cofactor.

The catalysed reaction is NAD(+) + (deoxyribonucleotide)n-3'-hydroxyl + 5'-phospho-(deoxyribonucleotide)m = (deoxyribonucleotide)n+m + AMP + beta-nicotinamide D-nucleotide.. In terms of biological role, DNA ligase that catalyzes the formation of phosphodiester linkages between 5'-phosphoryl and 3'-hydroxyl groups in double-stranded DNA using NAD as a coenzyme and as the energy source for the reaction. It is essential for DNA replication and repair of damaged DNA. The polypeptide is DNA ligase (Lactobacillus johnsonii (strain CNCM I-12250 / La1 / NCC 533)).